Consider the following 200-residue polypeptide: Small ribosomal subunit protein uS4 (200 aa).

Residues threonine 22 to lysine 43 are disordered. An S4 RNA-binding domain is found at glutamine 92–glutamate 170.

It belongs to the universal ribosomal protein uS4 family. In terms of assembly, part of the 30S ribosomal subunit. Contacts protein S5. The interaction surface between S4 and S5 is involved in control of translational fidelity.

Functionally, one of the primary rRNA binding proteins, it binds directly to 16S rRNA where it nucleates assembly of the body of the 30S subunit. With S5 and S12 plays an important role in translational accuracy. The protein is Small ribosomal subunit protein uS4 of Listeria welshimeri serovar 6b (strain ATCC 35897 / DSM 20650 / CCUG 15529 / CIP 8149 / NCTC 11857 / SLCC 5334 / V8).